Reading from the N-terminus, the 319-residue chain is Formimidoylglutamase (319 aa).

Positions 131, 154, 156, 158, 248, and 250 each coordinate Mn(2+).

It belongs to the arginase family. Mn(2+) is required as a cofactor.

It catalyses the reaction N-formimidoyl-L-glutamate + H2O = formamide + L-glutamate. It functions in the pathway amino-acid degradation; L-histidine degradation into L-glutamate; L-glutamate from N-formimidoyl-L-glutamate (hydrolase route): step 1/1. Catalyzes the conversion of N-formimidoyl-L-glutamate to L-glutamate and formamide. This is Formimidoylglutamase from Legionella pneumophila (strain Paris).